Consider the following 265-residue polypeptide: Pre-mRNA-splicing factor cwf15 (265 aa).

Disordered stretches follow at residues Met-1 to Ala-31 and Ala-62 to Gln-197. Positions Glu-113 to Val-125 are enriched in acidic residues. The span at Ser-143 to Glu-155 shows a compositional bias: low complexity. A coiled-coil region spans residues Glu-155 to Ala-205. Acidic residues predominate over residues Ser-156 to Thr-167. Over residues Arg-172 to Gln-197 the composition is skewed to basic and acidic residues.

The protein belongs to the CWC15 family. As to quaternary structure, belongs to the 40S cdc5-associated complex (or cwf complex), a spliceosome sub-complex reminiscent of a late-stage spliceosome composed of the U2, U5 and U6 snRNAs and at least brr2, cdc5, cwf2/prp3, cwf3/syf1, cwf4/syf3, cwf5/ecm2, spp42/cwf6, cwf7/spf27, cwf8, cwf9, cwf10, cwf11, cwf12, prp45/cwf13, cwf14, cwf15, cwf16, cwf17, cwf18, cwf19, cwf20, cwf21, cwf22, cwf23, cwf24, cwf25, cwf26, cyp7/cwf27, cwf28, cwf29/ist3, lea1, msl1, prp5/cwf1, prp10, prp12/sap130, prp17, prp22, sap61, sap62, sap114, sap145, slu7, smb1, smd1, smd3, smf1, smg1 and syf2.

It localises to the nucleus. Involved in pre-mRNA splicing. In Schizosaccharomyces pombe (strain 972 / ATCC 24843) (Fission yeast), this protein is Pre-mRNA-splicing factor cwf15 (cwf15).